Here is a 324-residue protein sequence, read N- to C-terminus: Quinolinate synthase 2 (324 aa).

Iminosuccinate-binding residues include histidine 48 and serine 66. Residue cysteine 111 participates in [4Fe-4S] cluster binding. Iminosuccinate is bound by residues 137–139 and serine 154; that span reads YVN. Cysteine 196 serves as a coordination point for [4Fe-4S] cluster. Iminosuccinate contacts are provided by residues 222–224 and threonine 239; that span reads HPE. Position 282 (cysteine 282) interacts with [4Fe-4S] cluster.

The protein belongs to the quinolinate synthase family. Type 2 subfamily. The cofactor is [4Fe-4S] cluster.

Its subcellular location is the cytoplasm. The catalysed reaction is iminosuccinate + dihydroxyacetone phosphate = quinolinate + phosphate + 2 H2O + H(+). Its pathway is cofactor biosynthesis; NAD(+) biosynthesis; quinolinate from iminoaspartate: step 1/1. Its function is as follows. Catalyzes the condensation of iminoaspartate with dihydroxyacetone phosphate to form quinolinate. The protein is Quinolinate synthase 2 of Mesorhizobium japonicum (strain LMG 29417 / CECT 9101 / MAFF 303099) (Mesorhizobium loti (strain MAFF 303099)).